The following is a 144-amino-acid chain: Glycophorin-A (144 aa).

The segment covering 1–25 (SSTTVPATHTSSSSLGPEQYVSSQS) has biased composition (polar residues). The tract at residues 1–55 (SSTTVPATHTSSSSLGPEQYVSSQSNDKHTSDSHPTPTSAHEVTTEFSGRTHYPP) is disordered. The O-linked (GalNAc...) serine glycan is linked to S2. T3, T4, T8, and T10 each carry an O-linked (GalNAc...) threonine glycan. 6 O-linked (GalNAc...) serine glycosylation sites follow: S11, S12, S13, S14, S22, and S23. 5 O-linked (GalNAc...) threonine glycosylation sites follow: T30, T36, T38, T44, and T45. A compositionally biased stretch (polar residues) spans 33–48 (SHPTPTSAHEVTTEFS). The O-linked (GalNAc...) serine glycan is linked to S48. O-linked (GalNAc...) threonine glycosylation is present at T51. Residues 70 to 92 (LVIALIIFGVMAGVIGTILFISY) form a helical membrane-spanning segment. The disordered stretch occupies residues 101–144 (SESDVQPLPPPDAEVPLSSVEIEDPEETDELNSFTKPNQERNES). Phosphoserine is present on S118. The span at 121 to 130 (EIEDPEETDE) shows a compositional bias: acidic residues.

It belongs to the glycophorin-A family. Homodimer. Component of the ankyrin-1 complex in the erythrocyte, composed of ANK1, RHCE, RHAG, SLC4A1, EPB42, GYPA, GYPB and AQP1. Interacts with SLC4A1; a GYPA monomer is bound at each end of the SLC4A1 dimer forming a heterotetramer.

The protein resides in the membrane. Its function is as follows. Component of the ankyrin-1 complex, a multiprotein complex involved in the stability and shape of the erythrocyte membrane. Glycophorin A is the major intrinsic membrane protein of the erythrocyte. The N-terminal glycosylated segment, which lies outside the erythrocyte membrane, has MN blood group receptors. Appears to be important for the function of SLC4A1 and is required for high activity of SLC4A1. May be involved in translocation of SLC4A1 to the plasma membrane. In Macaca fuscata fuscata (Japanese macaque), this protein is Glycophorin-A.